We begin with the raw amino-acid sequence, 177 residues long: Large ribosomal subunit protein uL6 (177 aa).

It belongs to the universal ribosomal protein uL6 family. As to quaternary structure, part of the 50S ribosomal subunit.

This protein binds to the 23S rRNA, and is important in its secondary structure. It is located near the subunit interface in the base of the L7/L12 stalk, and near the tRNA binding site of the peptidyltransferase center. This Bradyrhizobium sp. (strain ORS 278) protein is Large ribosomal subunit protein uL6.